An 826-amino-acid polypeptide reads, in one-letter code: (2S)-3-sulfopropanediol dehydratase (826 aa).

Residues 33–695 enclose the PFL domain; the sequence is PRVNRLRQAF…NTNASIDGRK (663 aa). The Cysteine radical intermediate role is filled by Cys-464. The Proton acceptor role is filled by Glu-466. In terms of domain architecture, Glycine radical spans 706–826; the sequence is PVHTDGGSHD…DLIQRTELHF (121 aa). Gly-802 is modified (glycine radical).

It belongs to the glycyl radical enzyme (GRE) family. In terms of processing, requires the activating protein HpfH to generate the key active site glycyl radical on Gly-802 that is involved in catalysis.

It catalyses the reaction (2S)-3-sulfopropanediol = 3-oxopropane-1-sulfonate + H2O. Its pathway is organosulfur degradation; alkanesulfonate degradation. Its function is as follows. Involved in the degradation of the organosulfur compound 2(S)-dihydroxypropanesulfonate (DHPS). Catalyzes the radical-mediated dehydration of DHPS to produce 3-sulfopropionaldehyde (3-oxopropane-1-sulfonate). The chain is (2S)-3-sulfopropanediol dehydratase from Klebsiella oxytoca.